The following is a 341-amino-acid chain: DNA repair protein XRCC3 (341 aa).

Met-1 carries the post-translational modification N-acetylmethionine. Position 107-114 (107-114) interacts with ATP; it reads GRSSAGKT.

Belongs to the RecA family. RAD51 subfamily. In terms of assembly, interacts with RAD51C and RAD51. Part of the CX3 complex consisting of RAD51C and XRCC3; the complex has a ring-like structure arranged into a flat disc around a central channel; CX3 can interact with RAD51 in vitro. Forms a complex with FANCD2, BRCA2 and phosphorylated FANCG. Interacts with SWSAP1 and ZSWIM7; involved in homologous recombination repair. Interacts directly with PALB2 which may serve as a scaffold for a HR complex containing PALB2, BRCA2, RAD51C, RAD51 and XRCC3.

The protein localises to the nucleus. The protein resides in the cytoplasm. It localises to the perinuclear region. It is found in the mitochondrion matrix. Functionally, involved in the homologous recombination repair (HRR) pathway of double-stranded DNA, thought to repair chromosomal fragmentation, translocations and deletions. Part of the RAD21 paralog protein complex CX3 which acts in the BRCA1-BRCA2-dependent HR pathway. Upon DNA damage, CX3 acts downstream of RAD51 recruitment; the complex binds predominantly to the intersection of the four duplex arms of the Holliday junction (HJ) and to junctions of replication forks. Involved in HJ resolution and thus in processing HR intermediates late in the DNA repair process; the function may be linked to the CX3 complex and seems to involve GEN1 during mitotic cell cycle progression. Part of a PALB2-scaffolded HR complex containing BRCA2 and RAD51C and which is thought to play a role in DNA repair by HR. Plays a role in regulating mitochondrial DNA copy number under conditions of oxidative stress in the presence of RAD51 and RAD51C. This Bos taurus (Bovine) protein is DNA repair protein XRCC3 (XRCC3).